Reading from the N-terminus, the 411-residue chain is Alpha-galactosidase (411 aa).

The N-terminal stretch at 1–24 is a signal peptide; it reads MATHYSIIGGMIIVVLLMIIGSEG. Residues 25–47 constitute a propeptide that is removed on maturation; it reads GRLLEKKNRTSAEAEHYNVRRYL. The N-linked (GlcNAc...) asparagine glycan is linked to Asn-32. Cys-68 and Cys-100 are joined by a disulfide. Residue Asn-145 is glycosylated (N-linked (GlcNAc...) asparagine). Cys-148 and Cys-179 form a disulfide bridge. Asp-177 serves as the catalytic Nucleophile. 210-214 lines the substrate pocket; the sequence is EWGWE. Asp-232 functions as the Proton donor in the catalytic mechanism. Asn-352 is a glycosylation site (N-linked (GlcNAc...) asparagine).

This sequence belongs to the glycosyl hydrolase 27 family.

The catalysed reaction is Hydrolysis of terminal, non-reducing alpha-D-galactose residues in alpha-D-galactosides, including galactose oligosaccharides, galactomannans and galactolipids.. Its function is as follows. Involved in the hydrolysis of the galactomannan, it splits alpha-linked galactose moieties. It is particularly suitable for the hydrolysis of guar gum to a gum with improved gelling properties. Preferentially cleaves alpha-1,6 glycoside linkages. The polypeptide is Alpha-galactosidase (Cyamopsis tetragonoloba (Guar)).